A 340-amino-acid polypeptide reads, in one-letter code: Ketol-acid reductoisomerase (NADP(+)) (340 aa).

In terms of domain architecture, KARI N-terminal Rossmann spans 1 to 182; it reads MRVYYDRDCD…GGGRSGIIET (182 aa). Residues 24–27, Arg-48, Ser-51, Ser-53, and 83–86 each bind NADP(+); these read YGSQ and DELQ. Residue His-108 is part of the active site. Gly-134 contacts NADP(+). Residues 183-329 enclose the KARI C-terminal knotted domain; it reads NFRQECETDL…EKLRGMMPWI (147 aa). Asp-191, Glu-195, Glu-227, and Glu-231 together coordinate Mg(2+). Residue Ser-252 participates in substrate binding.

This sequence belongs to the ketol-acid reductoisomerase family. Requires Mg(2+) as cofactor.

The enzyme catalyses (2R)-2,3-dihydroxy-3-methylbutanoate + NADP(+) = (2S)-2-acetolactate + NADPH + H(+). The catalysed reaction is (2R,3R)-2,3-dihydroxy-3-methylpentanoate + NADP(+) = (S)-2-ethyl-2-hydroxy-3-oxobutanoate + NADPH + H(+). The protein operates within amino-acid biosynthesis; L-isoleucine biosynthesis; L-isoleucine from 2-oxobutanoate: step 2/4. It functions in the pathway amino-acid biosynthesis; L-valine biosynthesis; L-valine from pyruvate: step 2/4. Functionally, involved in the biosynthesis of branched-chain amino acids (BCAA). Catalyzes an alkyl-migration followed by a ketol-acid reduction of (S)-2-acetolactate (S2AL) to yield (R)-2,3-dihydroxy-isovalerate. In the isomerase reaction, S2AL is rearranged via a Mg-dependent methyl migration to produce 3-hydroxy-3-methyl-2-ketobutyrate (HMKB). In the reductase reaction, this 2-ketoacid undergoes a metal-dependent reduction by NADPH to yield (R)-2,3-dihydroxy-isovalerate. The protein is Ketol-acid reductoisomerase (NADP(+)) of Cereibacter sphaeroides (strain ATCC 17025 / ATH 2.4.3) (Rhodobacter sphaeroides).